The primary structure comprises 243 residues: Adenosine 5'-phosphosulfate reductase (243 aa).

The protein belongs to the PAPS reductase family. CysH subfamily. [4Fe-4S] cluster is required as a cofactor.

Its subcellular location is the cytoplasm. The enzyme catalyses [thioredoxin]-disulfide + sulfite + AMP + 2 H(+) = adenosine 5'-phosphosulfate + [thioredoxin]-dithiol. It functions in the pathway sulfur metabolism; hydrogen sulfide biosynthesis; sulfite from sulfate. In terms of biological role, catalyzes the formation of sulfite from adenosine 5'-phosphosulfate (APS) using thioredoxin as an electron donor. This is Adenosine 5'-phosphosulfate reductase from Staphylococcus haemolyticus (strain JCSC1435).